A 280-amino-acid polypeptide reads, in one-letter code: Probable S-methyl-5'-thioinosine phosphorylase (280 aa).

Residues Thr-8 and 50–51 (RH) contribute to the phosphate site. Met-175 provides a ligand contact to substrate. Residue Thr-176 coordinates phosphate. A substrate-binding site is contributed by 199-201 (NYA).

The protein belongs to the PNP/MTAP phosphorylase family. MTAP subfamily. Homotrimer.

The enzyme catalyses S-methyl-5'-thioinosine + phosphate = 5-(methylsulfanyl)-alpha-D-ribose 1-phosphate + hypoxanthine. It functions in the pathway purine metabolism; purine nucleoside salvage. Its function is as follows. Catalyzes the reversible phosphorylation of S-methyl-5'-thioinosine (MTI) to hypoxanthine and 5-methylthioribose-1-phosphate. Involved in the breakdown of S-methyl-5'-thioadenosine (MTA), a major by-product of polyamine biosynthesis. Catabolism of (MTA) occurs via deamination to MTI and phosphorolysis to hypoxanthine. This chain is Probable S-methyl-5'-thioinosine phosphorylase, found in Methanothermobacter thermautotrophicus (strain ATCC 29096 / DSM 1053 / JCM 10044 / NBRC 100330 / Delta H) (Methanobacterium thermoautotrophicum).